A 547-amino-acid polypeptide reads, in one-letter code: Pyochelin synthase PchD (547 aa).

The protein belongs to the ATP-dependent AMP-binding enzyme family.

The catalysed reaction is salicylate + holo-[ACP] + ATP = salicyl-[ACP] + AMP + diphosphate. It participates in siderophore biosynthesis. The protein operates within antifungal biosynthesis. Functionally, involved in the biosynthesis of the siderophore pyochelin. Specifically adenylates salicylate and loads it onto the holo form of PchE via a thioester linkage to the phosphopanthetheine moiety. Is also involved in the synthesis of the antifungal antibiotic dihydroaeruginoic acid (Dha or hydroxyphenyl-thiazolinyl-carboxylate), a precursor of pyochelin. This is Pyochelin synthase PchD from Pseudomonas aeruginosa (strain UCBPP-PA14).